A 156-amino-acid polypeptide reads, in one-letter code: ATP synthase subunit b (156 aa).

Residues 11–31 (LIAFALFVWFCMKFVWPPIIN) traverse the membrane as a helical segment.

The protein belongs to the ATPase B chain family. As to quaternary structure, F-type ATPases have 2 components, F(1) - the catalytic core - and F(0) - the membrane proton channel. F(1) has five subunits: alpha(3), beta(3), gamma(1), delta(1), epsilon(1). F(0) has three main subunits: a(1), b(2) and c(10-14). The alpha and beta chains form an alternating ring which encloses part of the gamma chain. F(1) is attached to F(0) by a central stalk formed by the gamma and epsilon chains, while a peripheral stalk is formed by the delta and b chains.

Its subcellular location is the cell inner membrane. F(1)F(0) ATP synthase produces ATP from ADP in the presence of a proton or sodium gradient. F-type ATPases consist of two structural domains, F(1) containing the extramembraneous catalytic core and F(0) containing the membrane proton channel, linked together by a central stalk and a peripheral stalk. During catalysis, ATP synthesis in the catalytic domain of F(1) is coupled via a rotary mechanism of the central stalk subunits to proton translocation. Functionally, component of the F(0) channel, it forms part of the peripheral stalk, linking F(1) to F(0). The polypeptide is ATP synthase subunit b (Haemophilus influenzae (strain 86-028NP)).